Here is a 532-residue protein sequence, read N- to C-terminus: Pre-rRNA-processing protein pro-1 (532 aa).

WD repeat units lie at residues 136–175 and 287–326; these read AHYQ…SADR and GHSD…CLKV. The disordered stretch occupies residues 435–464; that stretch reads TLGDDEDDAPEVGNQRRQNKKNNKKNRKLQ. A coiled-coil region spans residues 445–526; that stretch reads EVGNQRRQNK…INRQMYEFVA (82 aa). Residues 451–464 are compositionally biased toward basic residues; that stretch reads RQNKKNNKKNRKLQ.

Belongs to the WD repeat IPI3/WDR18 family. As to quaternary structure, component of the PELP1 complex, composed of at least PELP1, TEX10 and WDR18. The complex interacts with pre-60S ribosome particles.

The protein resides in the nucleus. Its subcellular location is the nucleolus. The protein localises to the nucleoplasm. In terms of biological role, component of the PELP1 complex involved in the nucleolar steps of 28S rRNA maturation and the subsequent nucleoplasmic transit of the pre-60S ribosomal subunit. Required for processing ITS2 sequences from rRNA intermediates during 26S rRNA maturation. Required in the soma to promote normal proliferation and prevent germline tumor formation. The protein is Pre-rRNA-processing protein pro-1 (pro-1) of Caenorhabditis briggsae.